The chain runs to 273 residues: Putative pyruvate, phosphate dikinase regulatory protein (273 aa).

151-158 (GVSRTSKT) contacts ADP.

The protein belongs to the pyruvate, phosphate/water dikinase regulatory protein family. PDRP subfamily.

The catalysed reaction is N(tele)-phospho-L-histidyl/L-threonyl-[pyruvate, phosphate dikinase] + ADP = N(tele)-phospho-L-histidyl/O-phospho-L-threonyl-[pyruvate, phosphate dikinase] + AMP + H(+). It catalyses the reaction N(tele)-phospho-L-histidyl/O-phospho-L-threonyl-[pyruvate, phosphate dikinase] + phosphate + H(+) = N(tele)-phospho-L-histidyl/L-threonyl-[pyruvate, phosphate dikinase] + diphosphate. Bifunctional serine/threonine kinase and phosphorylase involved in the regulation of the pyruvate, phosphate dikinase (PPDK) by catalyzing its phosphorylation/dephosphorylation. In Desulfitobacterium hafniense (strain DSM 10664 / DCB-2), this protein is Putative pyruvate, phosphate dikinase regulatory protein.